Consider the following 87-residue polypeptide: Pro-gurmarin (87 aa).

A signal peptide spans methionine 1–alanine 20. Positions valine 21–glycine 52 are excised as a propeptide. Glutamine 53 carries the post-translational modification Pyrrolidone carboxylic acid. 3 disulfide bridges follow: cysteine 55–cysteine 70, cysteine 62–cysteine 75, and cysteine 69–cysteine 85.

In terms of tissue distribution, expressed in leaves (at protein level).

Functionally, peptide that strongly, but reversibly, suppresses the sweet taste-response to various sweeteners, including sugars, sweet amino acids and the artificial sweetener saccharin. In rodents, potentially binds to a sweet taste receptor present on apical microvilli of a subset of taste bud cells. Highly effective at blocking the sweet taste-response in rodents such as rats and mice, though mice may possess a mix of gurmarin-sensitive and -insensitive receptors. Has almost no effect on the sweet taste-response in humans. Inhibits Staphylococcus aureus biofilm formation without affecting bacterial viability. May be one of at least 9 different disulfide-rich peptides produced with varying properties. This Gymnema sylvestre (Gurmar) protein is Pro-gurmarin.